Reading from the N-terminus, the 243-residue chain is Ribonuclease PH (243 aa).

Residues Arg-91 and 129–131 (GTR) contribute to the phosphate site.

This sequence belongs to the RNase PH family. As to quaternary structure, homohexameric ring arranged as a trimer of dimers.

The enzyme catalyses tRNA(n+1) + phosphate = tRNA(n) + a ribonucleoside 5'-diphosphate. Functionally, phosphorolytic 3'-5' exoribonuclease that plays an important role in tRNA 3'-end maturation. Removes nucleotide residues following the 3'-CCA terminus of tRNAs; can also add nucleotides to the ends of RNA molecules by using nucleoside diphosphates as substrates, but this may not be physiologically important. Probably plays a role in initiation of 16S rRNA degradation (leading to ribosome degradation) during starvation. This Burkholderia lata (strain ATCC 17760 / DSM 23089 / LMG 22485 / NCIMB 9086 / R18194 / 383) protein is Ribonuclease PH.